The chain runs to 360 residues: DNA replication and repair protein RecF (360 aa).

33–40 serves as a coordination point for ATP; sequence GENGSGKT.

The protein belongs to the RecF family.

It localises to the cytoplasm. Functionally, the RecF protein is involved in DNA metabolism; it is required for DNA replication and normal SOS inducibility. RecF binds preferentially to single-stranded, linear DNA. It also seems to bind ATP. The chain is DNA replication and repair protein RecF from Rickettsia rickettsii (strain Iowa).